The chain runs to 1507 residues: Transient receptor potential cation channel subfamily M member 2 (1507 aa).

Residues 1–11 (MEPLDQRRTDS) show a composition bias toward basic and acidic residues. A disordered region spans residues 1–24 (MEPLDQRRTDSDQEEGFGVQSRRA). The Cytoplasmic portion of the chain corresponds to 1–751 (MEPLDQRRTD…WWGQLCVDNG (751 aa)). The ADP-D-ribose site is built by Thr173, Asn178, Arg301, Gly332, and Thr335. Thr739 carries the phosphothreonine modification. An intramembrane segment occupies 752-768 (LWRIILCMLAFPLLFTG). Over 769-793 (FISFREKRLQALCRLARVRAFFNAP) the chain is Cytoplasmic. The chain crosses the membrane as a helical span at residues 794-814 (VVIFYLNILSYFAFLCLFAYV). At 815-825 (LMVDFQPSPSW) the chain is on the extracellular side. Residues 826-846 (CEYLIYLWLFSLVCEETRQLF) form a helical membrane-spanning segment. Glu841 and Gln844 together coordinate Ca(2+). Over 847-865 (YDPDGCGLMKMASLYFSDF) the chain is Cytoplasmic. The helical transmembrane segment at 866–886 (WNKLDVGAILLFIAGLTCRLI) threads the bilayer. Asn867 is a binding site for Ca(2+). Residues 887 to 894 (PATLYPGR) are Extracellular-facing. Residues 895 to 915 (IILSLDFIMFCLRLMHIFTIS) form a helical membrane-spanning segment. Over 916 to 927 (KTLGPKIIIVKR) the chain is Cytoplasmic. Residues 928–948 (MMKDVFFFLFLLAVWVVSFGV) traverse the membrane as a helical segment. Residues 949–968 (AKQAILIHNESRVDWIFRGV) lie on the Extracellular side of the membrane. Positions 969-983 (IYHSYLTIFGQIPTY) form an intramembrane region, pore-forming. The Selectivity filter signature appears at 977–980 (FGQI). Over 984-1020 (IDGVNFSMDQCSPNGTDPYKPKCPESDWTGQAPAFPE) the chain is Extracellular. Cys994 and Cys1006 are oxidised to a cystine. The chain crosses the membrane as a helical span at residues 1021-1042 (WLTVTLLCLYLLFANILLLNLL). The Cytoplasmic segment spans residues 1043 to 1077 (IAMFNYTFQEVQEHTDQIWKFQRHDLIEEYHGRPP). Glu1071 is a binding site for Ca(2+). The stretch at 1078–1096 (APPPLILLSHLQLLIKRIV) is an intramembrane region. Residues 1097–1507 (LKIPAKRHKQ…KVASLFGAHF (411 aa)) are Cytoplasmic-facing. Residues 1351–1502 (RWKRNQGGGI…KKILQKVASL (152 aa)) form the Nudix hydrolase domain. Residue Ser1379 coordinates ADP-D-ribose. A Nudix box motif is present at residues 1387–1408 (GSREPGKMLPRKLKQVLQQEYW). ADP-D-ribose is bound by residues Asp1428, Arg1430, Tyr1489, and Asn1491.

The protein belongs to the transient receptor (TC 1.A.4) family. LTrpC subfamily. TRPM2 sub-subfamily. Homotetramer. In terms of processing, phosphorylation of TRPM2 at Thr-739 by protein kinase C (PKC) counteracts the effect of cytosolic Ca(2+) and elevates the temperature threshold. As to expression, detected in pancreas beta-cells. Detected in fetal brain cortex neurons (at protein level).

The protein localises to the cell membrane. The protein resides in the perikaryon. It is found in the cell projection. It localises to the cytoplasmic vesicle. Its subcellular location is the lysosome. The catalysed reaction is Ca(2+)(in) = Ca(2+)(out). It carries out the reaction Na(+)(in) = Na(+)(out). With respect to regulation, activated by intracellular ADP-ribose, beta-NAD (NAD(+)) and similar compounds, and by oxidative stress caused by reactive oxygen or nitrogen species. Ca(2+) and PI(4,5)P2 are required for channel opening by ADP-ribose. Activation by ADP-ribose and beta-NAD is strongly increased by moderate heat (35 to 40 degrees Celsius). Likewise, reactive oxygen species lower the threshold for activation by moderate heat (37 degrees Celsius). Activated by moderate heat (35 to 40 degrees Celsius). Inactivated by exposure to extracellular pH between 4.0 and 6.5; irreversibly inactivated when open channels are exposed to extracellular pH between 4.0 and 6.5, while pre-exposure of closed channels to extracellular pH 5.5 gives rise to currents that rapidly inactivate, but protects against irreversible inactivation. Inactivated by intracellular ATP. Activated by arachidonic acid. Inhibited by 2-aminoethyl diphenylborinate (2-APB). Functionally, nonselective, voltage-independent cation channel that mediates Na(+) and Ca(2+) influx, leading to increased cytoplasmic Ca(2+) levels. Functions as a ligand-gated ion channel gated by intracellular adenosine diphosphate ribose (ADP-ribose), Ca(2+), warm temperature, and oxidative stress. The precise physiological activators are under debate; the true, physiological activators may be ADP-ribose and ADP-ribose-2'-phosphate. Binding of ADP-ribose to the cytoplasmic Nudix domain causes a conformation change; the channel is primed but still requires Ca(2+) binding to trigger channel opening. Extracellular Ca(2+) passes through the channel and increases channel activity. Also contributes to Ca(2+) release from intracellular stores in response to ADP-ribose. Plays a role in numerous processes that involve signaling via intracellular Ca(2+) levels. Besides, mediates the release of lysosomal Zn(2+) stores in response to reactive oxygen species, leading to increased cytosolic Zn(2+) levels. Plays a role in insulin secretion, a process that requires increased cytoplasmic Ca(2+) levels. Required for normal IFNG and cytokine secretion and normal innate immune immunity in response to bacterial infection. Required for normal phagocytosis and cytokine release by macrophages exposed to zymosan (in vitro). Plays a role in dendritic cell differentiation and maturation, and in dendritic cell chemotaxis via its role in regulating cytoplasmic Ca(2+) levels. Plays a role in the regulation of the reorganization of the actin cytoskeleton and filopodia formation in response to reactive oxygen species via its function in increasing cytoplasmic Ca(2+) and Zn(2+) levels. Confers susceptibility to cell death following oxidative stress. This Rattus norvegicus (Rat) protein is Transient receptor potential cation channel subfamily M member 2.